Here is a 1201-residue protein sequence, read N- to C-terminus: HEAT repeat-containing protein 6 (1201 aa).

A disordered region spans residues 1-25 (MAGKVTFLGSNSSFSPDGKTQGFKS). The stretch at 182–221 (PDLLGPSGVLVKYGDPKQPDIELRRSAVHCIANLCLSVPS) is one HEAT 1 repeat. The tract at residues 321 to 390 (AVKPEPAQDT…SQSSMLTSPS (70 aa)) is disordered. The span at 341 to 352 (QKKRKSRGKGKK) shows a compositional bias: basic residues. A compositionally biased stretch (polar residues) spans 375 to 390 (SGWSHGSQSSMLTSPS). 3 HEAT repeats span residues 460-498 (GIGG…GSRQ), 523-560 (SIRE…NVPY), and 566-603 (GLLS…TQAP). The span at 618–633 (SSLGSGISTPQESPLS) shows a compositional bias: polar residues. Residues 618–653 (SSLGSGISTPQESPLSWRQPARRDEEASSPAAAEGP) form a disordered region.

This Danio rerio (Zebrafish) protein is HEAT repeat-containing protein 6 (heatr6).